We begin with the raw amino-acid sequence, 1433 residues long: DNA-directed RNA polymerase subunit beta' (1433 aa).

Cys-66, Cys-68, Cys-81, and Cys-84 together coordinate Zn(2+). Mg(2+) contacts are provided by Asp-473, Asp-475, and Asp-477. Zn(2+) contacts are provided by Cys-815, Cys-889, Cys-896, and Cys-899.

Belongs to the RNA polymerase beta' chain family. The RNAP catalytic core consists of 2 alpha, 1 beta, 1 beta' and 1 omega subunit. When a sigma factor is associated with the core the holoenzyme is formed, which can initiate transcription. Requires Mg(2+) as cofactor. The cofactor is Zn(2+).

The catalysed reaction is RNA(n) + a ribonucleoside 5'-triphosphate = RNA(n+1) + diphosphate. Its function is as follows. DNA-dependent RNA polymerase catalyzes the transcription of DNA into RNA using the four ribonucleoside triphosphates as substrates. The polypeptide is DNA-directed RNA polymerase subunit beta' (Porphyromonas gingivalis (strain ATCC 33277 / DSM 20709 / CIP 103683 / JCM 12257 / NCTC 11834 / 2561)).